The chain runs to 218 residues: Glutathione S-transferase Mu 2 (218 aa).

The GST N-terminal domain maps to 2–88 (PMTLGYWNIR…YIARKHNLCG (87 aa)). 7-8 (YW) is a glutathione binding site. Serine 27 and serine 44 each carry phosphoserine. Residues 43-46 (RSQW), lysine 50, 59-60 (NL), and 72-73 (QS) contribute to the glutathione site. The GST C-terminal domain maps to 90 to 208 (TEKEKIREDI…KSSRFLPRPV (119 aa)). Tyrosine 116 serves as a coordination point for substrate.

This sequence belongs to the GST superfamily. Mu family. In terms of assembly, homodimer.

The protein resides in the cytoplasm. It carries out the reaction RX + glutathione = an S-substituted glutathione + a halide anion + H(+). The catalysed reaction is 11(S)-hydroxy-14(S),15(S)-epoxy-(5Z,8Z,12E)-eicosatrienoate + glutathione = (11S,15S)-dihydroxy-14(R)-S-glutathionyl-(5Z,8Z,12E)-eicosatrienoate. Functionally, conjugation of reduced glutathione to a wide number of exogenous and endogenous hydrophobic electrophiles. Participates in the formation of novel hepoxilin regioisomers. Has activity toward aflatoxin B(1)-8,9-epoxide (AFBO). The chain is Glutathione S-transferase Mu 2 (GSTM2) from Macaca fascicularis (Crab-eating macaque).